A 186-amino-acid chain; its full sequence is Allergen Fel d 4 (186 aa).

A signal peptide spans Met-1–Ala-15. N-linked (GlcNAc...) asparagine glycosylation is found at Asn-51 and Asn-66. An intrachain disulfide couples Cys-81 to Cys-171.

Belongs to the calycin superfamily. Lipocalin family. In terms of tissue distribution, abundant in urine (at protein level).

The protein resides in the secreted. In terms of biological role, may be a pheromone carrier. Acts as a kairomone, detected by the prey vomeronasal organ and inducing fear reactions in mice. The sequence is that of Allergen Fel d 4 from Felis catus (Cat).